Here is a 313-residue protein sequence, read N- to C-terminus: Protoheme IX farnesyltransferase (313 aa).

Transmembrane regions (helical) follow at residues V34–V54, P56–L76, H105–T125, L128–L148, T152–S172, A173–T193, L243–L263, and Y291–F311.

It belongs to the UbiA prenyltransferase family. Protoheme IX farnesyltransferase subfamily.

The protein localises to the cell membrane. The enzyme catalyses heme b + (2E,6E)-farnesyl diphosphate + H2O = Fe(II)-heme o + diphosphate. It participates in porphyrin-containing compound metabolism; heme O biosynthesis; heme O from protoheme: step 1/1. Functionally, converts heme B (protoheme IX) to heme O by substitution of the vinyl group on carbon 2 of heme B porphyrin ring with a hydroxyethyl farnesyl side group. The polypeptide is Protoheme IX farnesyltransferase (Mycolicibacterium vanbaalenii (strain DSM 7251 / JCM 13017 / BCRC 16820 / KCTC 9966 / NRRL B-24157 / PYR-1) (Mycobacterium vanbaalenii)).